Reading from the N-terminus, the 311-residue chain is uncharacterized protein (311 aa).

Belongs to the peptidase C1 family.

This is an uncharacterized protein from Acanthamoeba polyphaga mimivirus (APMV).